Reading from the N-terminus, the 263-residue chain is MLLAWVQAFLVSNMLLAEAYGSGGCFWDNGHLYREDQTSPAPGLRCLNWLDAQSGLASAPVSGAGNHSYCRNPDEDPRGPWCYVSGEAGVPEKRPCEDLRCPETTSQALPAFTTEIQEASEGPGADEVQVFAPANALPARSEAAAVQPVIGISQRVRMNSKEKKDLGTLGYVLGITMMVIIIAIGAGIILGYSYKRGKDLKEQHDQKVCEREMQRITLPLSAFTNPTCEIVDEKTVVVHTSQTPVDPQEGTTPLMGQAGTPGA.

The signal sequence occupies residues 1-21 (MLLAWVQAFLVSNMLLAEAYG). Over 22–168 (SGGCFWDNGH…NSKEKKDLGT (147 aa)) the chain is Extracellular. The region spanning 24–101 (GCFWDNGHLY…EKRPCEDLRC (78 aa)) is the Kringle domain. 3 disulfides stabilise this stretch: Cys25-Cys101, Cys46-Cys82, and Cys70-Cys96. Ser39 is a glycosylation site (O-linked (GalNAc...) serine). Asn66 carries N-linked (GlcNAc...) (complex) asparagine glycosylation. The helical transmembrane segment at 169–189 (LGYVLGITMMVIIIAIGAGII) threads the bilayer. The Cytoplasmic segment spans residues 190-263 (LGYSYKRGKD…LMGQAGTPGA (74 aa)). The segment covering 242-251 (QTPVDPQEGT) has biased composition (polar residues). Residues 242-263 (QTPVDPQEGTTPLMGQAGTPGA) form a disordered region.

In terms of processing, N- and O-glycosylated. O-glycosylated with core 1 or possibly core 8 glycans. N-glycan heterogeneity at Asn-66: dHex1Hex5HexNAc4 (major) and dHex1Hex6HexNAc5 (minor).

The protein localises to the cell membrane. Functionally, negative regulator of hepatic phosphatidylinositol 3-kinase (PI3K) activity. The polypeptide is Phosphoinositide-3-kinase-interacting protein 1 (PIK3IP1) (Homo sapiens (Human)).